The sequence spans 229 residues: MNQWEELQESVGFDFKNVELLKQAFTHSSYVNEHRRENVKDNERLEFLGDAVLELTVSDYLFNKYPDMAEGHMTKMRAAIVCEPSLVEFAEAVHFSKYVRLGKGEEKAGGRTRPALLADVFESFIGALYLDNGIDKVVTFLERVIFPKIDAGAYLQTVDYKTQLQEIVQRDRDVLIEYDILGETGPAHNKAFDAQVIVNGQVLGKGSGRTKKQAEQSAAQFAINKLIHR.

One can recognise an RNase III domain in the interval 4–133 (WEELQESVGF…FIGALYLDNG (130 aa)). Position 46 (Glu46) interacts with Mg(2+). Residue Asp50 is part of the active site. Mg(2+) contacts are provided by Asp119 and Glu122. Glu122 is an active-site residue. The DRBM domain maps to 159 to 228 (DYKTQLQEIV…AQFAINKLIH (70 aa)).

The protein belongs to the ribonuclease III family. In terms of assembly, homodimer. It depends on Mg(2+) as a cofactor.

The protein resides in the cytoplasm. It catalyses the reaction Endonucleolytic cleavage to 5'-phosphomonoester.. Digests double-stranded RNA. Involved in the processing of primary rRNA transcript to yield the immediate precursors to the large and small rRNAs (23S and 16S). Processes some mRNAs, and tRNAs when they are encoded in the rRNA operon. Processes pre-crRNA and tracrRNA of type II CRISPR loci if present in the organism. This chain is Ribonuclease 3, found in Listeria monocytogenes serovar 1/2a (strain ATCC BAA-679 / EGD-e).